The primary structure comprises 859 residues: Envelope glycoprotein (859 aa).

A propeptide spanning residues 1–6 is cleaved from the precursor; sequence MVSIAF. The Extracellular segment spans residues 7-614; it reads YGGIPGGIST…KDLWSHIGNW (608 aa). N-linked (GlcNAc...) asparagine; by host glycans are attached at residues asparagine 40, asparagine 112, asparagine 141, asparagine 148, asparagine 186, asparagine 214, asparagine 233, asparagine 244, asparagine 340, asparagine 368, asparagine 399, asparagine 406, asparagine 411, and asparagine 422. The segment at 446-466 is fusion peptide; that stretch reads FGISAIVAAIVAATAIAASAT. 2 N-linked (GlcNAc...) asparagine; by host glycosylation sites follow: asparagine 483 and asparagine 490. The immunosuppression stretch occupies residues 498 to 513; sequence LIERQIKILYAMILQT. N-linked (GlcNAc...) asparagine; by host glycans are attached at residues asparagine 550 and asparagine 557. 2 coiled-coil regions span residues 576–624 and 663–699; these read ILTT…SIIK and KKFHHKHASREDTWDQAQHSIHLAGVTGGSGDKYYKQ. A helical transmembrane segment spans residues 615-635; it reads IPGLGASIIKYIVMFLLIYLL. The Cytoplasmic portion of the chain corresponds to 636–859; sequence LTSSPKILRA…TSHVSMPQYV (224 aa). A disordered region spans residues 745-764; that stretch reads AAINEHKNGSGGNNPHQGSL.

As to quaternary structure, the mature envelope protein (Env) consists of a trimer of SU-TM heterodimers attached by noncovalent interactions or by a labile interchain disulfide bond. Post-translationally, specific enzymatic cleavages in vivo yield mature proteins. Envelope glycoproteins are synthesized as an inactive precursor that is N-glycosylated and processed likely by host cell furin or by a furin-like protease in the Golgi to yield the mature SU and TM proteins. The cleavage site between SU and TM requires the minimal sequence [KR]-X-[KR]-R.

The protein localises to the virion membrane. Its subcellular location is the host cell membrane. The surface protein (SU) attaches the virus to the host cell by binding to its receptor. This interaction triggers the refolding of the transmembrane protein (TM) and is thought to activate its fusogenic potential by unmasking its fusion peptide. Fusion occurs at the host cell plasma membrane. Functionally, the transmembrane protein (TM) acts as a class I viral fusion protein. Under the current model, the protein has at least 3 conformational states: pre-fusion native state, pre-hairpin intermediate state, and post-fusion hairpin state. During viral and target cell membrane fusion, the coiled coil regions (heptad repeats) assume a trimer-of-hairpins structure, positioning the fusion peptide in close proximity to the C-terminal region of the ectodomain. The formation of this structure appears to drive apposition and subsequent fusion of viral and target cell membranes. Membranes fusion leads to delivery of the nucleocapsid into the cytoplasm. The polypeptide is Envelope glycoprotein (env) (Equus asinus (Donkey)).